The chain runs to 506 residues: Maturase K (506 aa).

Belongs to the intron maturase 2 family. MatK subfamily.

The protein resides in the plastid. It is found in the chloroplast. In terms of biological role, usually encoded in the trnK tRNA gene intron. Probably assists in splicing its own and other chloroplast group II introns. The chain is Maturase K from Manihot esculenta (Cassava).